Reading from the N-terminus, the 242-residue chain is Ribose-5-phosphate isomerase A (242 aa).

Substrate contacts are provided by residues 39–42 (SGST), 95–98 (DGAD), and 108–111 (KGGG). The Proton acceptor role is filled by glutamate 117. Residue lysine 135 participates in substrate binding.

The protein belongs to the ribose 5-phosphate isomerase family. Homodimer.

The enzyme catalyses aldehydo-D-ribose 5-phosphate = D-ribulose 5-phosphate. The protein operates within carbohydrate degradation; pentose phosphate pathway; D-ribose 5-phosphate from D-ribulose 5-phosphate (non-oxidative stage): step 1/1. Functionally, catalyzes the reversible conversion of ribose-5-phosphate to ribulose 5-phosphate. The sequence is that of Ribose-5-phosphate isomerase A from Chlamydia trachomatis serovar L2 (strain ATCC VR-902B / DSM 19102 / 434/Bu).